The primary structure comprises 101 residues: NADH-quinone oxidoreductase subunit K (101 aa).

3 helical membrane-spanning segments follow: residues 4–24 (VYDY…GIML), 29–49 (IILL…NFIA), and 61–81 (VFVF…LAIV).

It belongs to the complex I subunit 4L family. In terms of assembly, NDH-1 is composed of 14 different subunits. Subunits NuoA, H, J, K, L, M, N constitute the membrane sector of the complex.

The protein resides in the cell inner membrane. It carries out the reaction a quinone + NADH + 5 H(+)(in) = a quinol + NAD(+) + 4 H(+)(out). NDH-1 shuttles electrons from NADH, via FMN and iron-sulfur (Fe-S) centers, to quinones in the respiratory chain. The immediate electron acceptor for the enzyme in this species is believed to be ubiquinone. Couples the redox reaction to proton translocation (for every two electrons transferred, four hydrogen ions are translocated across the cytoplasmic membrane), and thus conserves the redox energy in a proton gradient. The chain is NADH-quinone oxidoreductase subunit K from Legionella pneumophila (strain Paris).